The following is a 563-amino-acid chain: Membrane protein insertase YidC (563 aa).

A helical membrane pass occupies residues 1–21 (MDIKRTILIVALAIVTYVGVL). Residues 43–62 (APGIPDTAAGTNGSASADVP) form a disordered region. 5 consecutive transmembrane segments (helical) span residues 344 to 364 (LELTVDYGFLWFIAQPIFWLL), 370 to 390 (ILGNWGWSIIVLTMLIKGLFF), 440 to 460 (LGGCLPILVQMPVFLSLYWVL), 471 to 491 (WILWITDLSIKDPFFILPIIM), and 518 to 538 (PIIFTFFFLWFPAGLVLYWVV).

Belongs to the OXA1/ALB3/YidC family. Type 1 subfamily. Interacts with the Sec translocase complex via SecD. Specifically interacts with transmembrane segments of nascent integral membrane proteins during membrane integration.

Its subcellular location is the cell inner membrane. Functionally, required for the insertion and/or proper folding and/or complex formation of integral membrane proteins into the membrane. Involved in integration of membrane proteins that insert both dependently and independently of the Sec translocase complex, as well as at least some lipoproteins. Aids folding of multispanning membrane proteins. This Pseudomonas savastanoi pv. phaseolicola (strain 1448A / Race 6) (Pseudomonas syringae pv. phaseolicola (strain 1448A / Race 6)) protein is Membrane protein insertase YidC.